Reading from the N-terminus, the 287-residue chain is Ribosomal RNA small subunit methyltransferase A (287 aa).

S-adenosyl-L-methionine-binding residues include Asn28, Leu30, Gly55, Glu77, Asp103, and Asn123.

The protein belongs to the class I-like SAM-binding methyltransferase superfamily. rRNA adenine N(6)-methyltransferase family. RsmA subfamily.

It is found in the cytoplasm. The enzyme catalyses adenosine(1518)/adenosine(1519) in 16S rRNA + 4 S-adenosyl-L-methionine = N(6)-dimethyladenosine(1518)/N(6)-dimethyladenosine(1519) in 16S rRNA + 4 S-adenosyl-L-homocysteine + 4 H(+). In terms of biological role, specifically dimethylates two adjacent adenosines (A1518 and A1519) in the loop of a conserved hairpin near the 3'-end of 16S rRNA in the 30S particle. May play a critical role in biogenesis of 30S subunits. This chain is Ribosomal RNA small subunit methyltransferase A, found in Rhodopseudomonas palustris (strain HaA2).